Consider the following 243-residue polypeptide: Segregation and condensation protein A (243 aa).

Belongs to the ScpA family. As to quaternary structure, component of a cohesin-like complex composed of ScpA, ScpB and the Smc homodimer, in which ScpA and ScpB bind to the head domain of Smc. The presence of the three proteins is required for the association of the complex with DNA.

The protein resides in the cytoplasm. Functionally, participates in chromosomal partition during cell division. May act via the formation of a condensin-like complex containing Smc and ScpB that pull DNA away from mid-cell into both cell halves. This chain is Segregation and condensation protein A, found in Staphylococcus aureus (strain NCTC 8325 / PS 47).